We begin with the raw amino-acid sequence, 107 residues long: Immunoglobulin kappa constant (107 aa).

Positions 6 to 103 constitute an Ig-like domain; the sequence is PTVSIFPPSS…STSPIVKSFN (98 aa). An intrachain disulfide couples cysteine 27 to cysteine 87.

The chain is Immunoglobulin kappa constant from Mus musculus (Mouse).